Consider the following 194-residue polypeptide: Putative 3-methyladenine DNA glycosylase (194 aa).

It belongs to the DNA glycosylase MPG family.

This Myxococcus xanthus (strain DK1622) protein is Putative 3-methyladenine DNA glycosylase.